Here is a 155-residue protein sequence, read N- to C-terminus: Ribosome maturation factor RimP (155 aa).

Belongs to the RimP family.

It is found in the cytoplasm. Functionally, required for maturation of 30S ribosomal subunits. This Phocaeicola vulgatus (strain ATCC 8482 / DSM 1447 / JCM 5826 / CCUG 4940 / NBRC 14291 / NCTC 11154) (Bacteroides vulgatus) protein is Ribosome maturation factor RimP.